We begin with the raw amino-acid sequence, 710 residues long: MSQEKQVFSIDLAGRQLTIETGQLAKQANGAVLVRYGDTAVLSTATASKEAKDVDFFPLTVNYEERLYAVGKIPGGFIKREGRPSEKAILASRLIDRPIRPLFADGFRNEVQVVSIVMSVDQDCSSEMAAMLGSSLALSISDIPFEGPIAGATVGRIDGEFIINPTVEQQEKSDIHLVVAGTKDAINMVEAGADQVPEETMLEAIMFGHEEIKRLIAFQEEIVQAVGKEKMEVKLYEVDAELEKAVREMAEKDMHTAIQVHEKHAREDAINEVKQRVIAHYEEQEVEAEVLGQVSEILYKIVKEEVRRLITVEKIRPDGRKSDEIRPLASEVGILPRTHGSGLFTRGQTQALSICTLGALGDVQILDGLGVEESKRFMHHYNFPSFSVGETRPMRGPGRREIGHGALGERALEPVIPSEKDFPYTVRLVSEVLESNGSTSQASICGSTLAMMDAGVPLKAPVAGIAMGLVKSGEHYTILTDIQGMEDHLGDMDFKVAGTAKGVTALQMDIKIDGLSREILEEALQQAKVGRMHILDHMLSVIAEPRKELSEYAPKIITMTINPDKIRDVIGPSGKQINKIIEETGVKIDIEQDGTVFISSIDQQMNEKAKKIIEDIVREVQVGEIYLGKVKRIEKFGAFVELFSGKDGLVHISELALERVGKVEDVVKIGDEISVKVIEIDKQGRVNLSRKVLLKEEQEKEVAKEEATQE.

Residues D487 and D493 each coordinate Mg(2+). Residues 554 to 613 (PKIITMTINPDKIRDVIGPSGKQINKIIEETGVKIDIEQDGTVFISSIDQQMNEKAKKII) enclose the KH domain. The region spanning 623–691 (GEIYLGKVKR…KQGRVNLSRK (69 aa)) is the S1 motif domain.

It belongs to the polyribonucleotide nucleotidyltransferase family. Mg(2+) serves as cofactor.

The protein localises to the cytoplasm. It carries out the reaction RNA(n+1) + phosphate = RNA(n) + a ribonucleoside 5'-diphosphate. Its function is as follows. Involved in mRNA degradation. Catalyzes the phosphorolysis of single-stranded polyribonucleotides processively in the 3'- to 5'-direction. This chain is Polyribonucleotide nucleotidyltransferase, found in Bacillus cytotoxicus (strain DSM 22905 / CIP 110041 / 391-98 / NVH 391-98).